The chain runs to 416 residues: UDP-N-acetylglucosamine 1-carboxyvinyltransferase (416 aa).

Phosphoenolpyruvate is bound at residue 22–23; the sequence is KN. Position 92 (arginine 92) interacts with UDP-N-acetyl-alpha-D-glucosamine. Cysteine 116 acts as the Proton donor in catalysis. Residue cysteine 116 is modified to 2-(S-cysteinyl)pyruvic acid O-phosphothioketal. Residues 121–125, aspartate 304, and isoleucine 326 contribute to the UDP-N-acetyl-alpha-D-glucosamine site; that span reads RPVDQ.

Belongs to the EPSP synthase family. MurA subfamily.

The protein resides in the cytoplasm. The catalysed reaction is phosphoenolpyruvate + UDP-N-acetyl-alpha-D-glucosamine = UDP-N-acetyl-3-O-(1-carboxyvinyl)-alpha-D-glucosamine + phosphate. Its pathway is cell wall biogenesis; peptidoglycan biosynthesis. Cell wall formation. Adds enolpyruvyl to UDP-N-acetylglucosamine. The protein is UDP-N-acetylglucosamine 1-carboxyvinyltransferase of Cupriavidus metallidurans (strain ATCC 43123 / DSM 2839 / NBRC 102507 / CH34) (Ralstonia metallidurans).